The following is a 421-amino-acid chain: Gamma-glutamyl phosphate reductase (421 aa).

The protein belongs to the gamma-glutamyl phosphate reductase family.

The protein localises to the cytoplasm. The enzyme catalyses L-glutamate 5-semialdehyde + phosphate + NADP(+) = L-glutamyl 5-phosphate + NADPH + H(+). Its pathway is amino-acid biosynthesis; L-proline biosynthesis; L-glutamate 5-semialdehyde from L-glutamate: step 2/2. In terms of biological role, catalyzes the NADPH-dependent reduction of L-glutamate 5-phosphate into L-glutamate 5-semialdehyde and phosphate. The product spontaneously undergoes cyclization to form 1-pyrroline-5-carboxylate. This Pseudomonas paraeruginosa (strain DSM 24068 / PA7) (Pseudomonas aeruginosa (strain PA7)) protein is Gamma-glutamyl phosphate reductase.